The primary structure comprises 259 residues: Haloacid dehalogenase-like hydrolase domain-containing protein 2 (259 aa).

Mg(2+) is bound by residues D13 and S15. Residues 13 to 15 (DLS) and 46 to 47 (TN) contribute to the substrate site. Residues 47 to 71 (NTTKESKQDLLERLRKLEFDISEDE) are a coiled coil. At K50 the chain carries N6-succinyllysine. K179 is a binding site for substrate. D204 serves as a coordination point for Mg(2+).

Belongs to the HAD-like hydrolase superfamily. Mg(2+) is required as a cofactor.

The chain is Haloacid dehalogenase-like hydrolase domain-containing protein 2 (HDHD2) from Homo sapiens (Human).